Here is a 225-residue protein sequence, read N- to C-terminus: Protein-L-isoaspartate O-methyltransferase 2 (225 aa).

Residue serine 73 is part of the active site.

Belongs to the methyltransferase superfamily. L-isoaspartyl/D-aspartyl protein methyltransferase family.

It localises to the cytoplasm. The catalysed reaction is [protein]-L-isoaspartate + S-adenosyl-L-methionine = [protein]-L-isoaspartate alpha-methyl ester + S-adenosyl-L-homocysteine. In terms of biological role, catalyzes the methyl esterification of L-isoaspartyl residues in peptides and proteins that result from spontaneous decomposition of normal L-aspartyl and L-asparaginyl residues. It plays a role in the repair and/or degradation of damaged proteins. The sequence is that of Protein-L-isoaspartate O-methyltransferase 2 from Pelobacter propionicus (strain DSM 2379 / NBRC 103807 / OttBd1).